Here is a 446-residue protein sequence, read N- to C-terminus: Trigger factor (446 aa).

The PPIase FKBP-type domain maps to 161–246 (GDRLTIDFKG…VSKVERSELP (86 aa)). Residues 422–446 (VSYEDAVKPRTAPAEQAEDGEQSAE) are disordered. The segment covering 437-446 (QAEDGEQSAE) has biased composition (acidic residues).

It belongs to the FKBP-type PPIase family. Tig subfamily.

Its subcellular location is the cytoplasm. The enzyme catalyses [protein]-peptidylproline (omega=180) = [protein]-peptidylproline (omega=0). Functionally, involved in protein export. Acts as a chaperone by maintaining the newly synthesized protein in an open conformation. Functions as a peptidyl-prolyl cis-trans isomerase. The polypeptide is Trigger factor (Hahella chejuensis (strain KCTC 2396)).